A 390-amino-acid polypeptide reads, in one-letter code: Phosphopentomutase (390 aa).

The Mn(2+) site is built by D11, D283, H288, D324, H325, and H336.

Belongs to the phosphopentomutase family. The cofactor is Mn(2+).

It is found in the cytoplasm. It catalyses the reaction 2-deoxy-alpha-D-ribose 1-phosphate = 2-deoxy-D-ribose 5-phosphate. It carries out the reaction alpha-D-ribose 1-phosphate = D-ribose 5-phosphate. Its pathway is carbohydrate degradation; 2-deoxy-D-ribose 1-phosphate degradation; D-glyceraldehyde 3-phosphate and acetaldehyde from 2-deoxy-alpha-D-ribose 1-phosphate: step 1/2. In terms of biological role, isomerase that catalyzes the conversion of deoxy-ribose 1-phosphate (dRib-1-P) and ribose 1-phosphate (Rib-1-P) to deoxy-ribose 5-phosphate (dRib-5-P) and ribose 5-phosphate (Rib-5-P), respectively. This is Phosphopentomutase from Clostridium acetobutylicum (strain ATCC 824 / DSM 792 / JCM 1419 / IAM 19013 / LMG 5710 / NBRC 13948 / NRRL B-527 / VKM B-1787 / 2291 / W).